The following is a 487-amino-acid chain: Ribosomal protein uS12 methylthiotransferase RimO (487 aa).

The MTTase N-terminal domain maps to 38 to 149; it reads PTVAFAHLGC…IVEVLEQVEA (112 aa). [4Fe-4S] cluster contacts are provided by Cys47, Cys83, Cys112, Cys187, Cys191, and Cys194. The Radical SAM core domain maps to 173-402; that stretch reads TTSEAVAYLK…MEAQQAISAE (230 aa). Positions 405–476 constitute a TRAM domain; sequence GAWVGRIVDV…IYDLEGEVVG (72 aa).

This sequence belongs to the methylthiotransferase family. RimO subfamily. [4Fe-4S] cluster is required as a cofactor.

Its subcellular location is the cytoplasm. The catalysed reaction is L-aspartate(89)-[ribosomal protein uS12]-hydrogen + (sulfur carrier)-SH + AH2 + 2 S-adenosyl-L-methionine = 3-methylsulfanyl-L-aspartate(89)-[ribosomal protein uS12]-hydrogen + (sulfur carrier)-H + 5'-deoxyadenosine + L-methionine + A + S-adenosyl-L-homocysteine + 2 H(+). Catalyzes the methylthiolation of an aspartic acid residue of ribosomal protein uS12. The sequence is that of Ribosomal protein uS12 methylthiotransferase RimO from Synechococcus sp. (strain RCC307).